Consider the following 147-residue polypeptide: Small ribosomal subunit protein uS12 (147 aa).

It belongs to the universal ribosomal protein uS12 family. In terms of assembly, part of the 30S ribosomal subunit.

In terms of biological role, with S4 and S5 plays an important role in translational accuracy. Located at the interface of the 30S and 50S subunits. The chain is Small ribosomal subunit protein uS12 from Pyrococcus abyssi (strain GE5 / Orsay).